Reading from the N-terminus, the 976-residue chain is Vacuolar membrane protease (976 aa).

Residues 1–15 (MKLKSVFRSVLKYRK) lie on the Cytoplasmic side of the membrane. The helical transmembrane segment at 16–36 (TNLSLLLLITYSIITLLYIFD) threads the bilayer. Topologically, residues 37–359 (HERYKLNLPK…KFFVISAKTL (323 aa)) are vacuolar. N-linked (GlcNAc...) asparagine glycans are attached at residues asparagine 96 and asparagine 121. Zn(2+) contacts are provided by histidine 156 and aspartate 168. N-linked (GlcNAc...) asparagine glycosylation occurs at asparagine 189. The active-site Proton acceptor is the glutamate 200. Glutamate 201 contacts Zn(2+). N-linked (GlcNAc...) asparagine glycans are attached at residues asparagine 212 and asparagine 217. Residues glutamate 226 and histidine 300 each coordinate Zn(2+). Residues 360 to 380 (FYWNCIFLLVSPVVAIGLYLI) form a helical membrane-spanning segment. The Cytoplasmic portion of the chain corresponds to 381 to 392 (SRDRMTWKSHSW). The chain crosses the membrane as a helical span at residues 393 to 412 (LSWTRFPLSLAAGIIVQKLF). The Vacuolar segment spans residues 413 to 428 (SNDIIRSNPLTFSRNY). The chain crosses the membrane as a helical span at residues 429–449 (FWPISAFFTQVIFTSYVLINC). Over 450 to 461 (SNFFFPCADMKS) the chain is Cytoplasmic. A helical transmembrane segment spans residues 462 to 482 (LSIIELFIILWTILLFTSKLL). Topologically, residues 483-496 (YSSDYRYTGLYPLS) are vacuolar. Residues 497–517 (IFFLLSTIAAILRLLALALGM) form a helical membrane-spanning segment. At 518-627 (RTRKRLGREC…NSLKLEYTDY (110 aa)) the chain is on the cytoplasmic side. Residues 528–610 (RDHHSNYSSH…PLLKGSNSME (83 aa)) form a disordered region. Residues 549 to 558 (NLEQPQDQFT) show a composition bias toward polar residues. Residues 559-570 (SSQDDQASIQDD) are compositionally biased toward low complexity. Residues 582-601 (NVDEDHGMDSSSQQHDERVP) are compositionally biased toward basic and acidic residues. Residues 628–648 (AWIIQFLLIVPIPSFILFNSV) traverse the membrane as a helical segment. The Vacuolar portion of the chain corresponds to 649-668 (DVIMDALNHTVQEGSKATFD). Residue asparagine 656 is glycosylated (N-linked (GlcNAc...) asparagine). A helical transmembrane segment spans residues 669-689 (VLRFGMVGSILMALPILPFFY). The Cytoplasmic portion of the chain corresponds to 690 to 692 (KVN). Residues 693 to 713 (YITISLTALLFLISASKTLLV) form a helical membrane-spanning segment. Over 714 to 976 (HPFTNSNPLK…LVIVKDAIIL (263 aa)) the chain is Vacuolar. N-linked (GlcNAc...) asparagine glycans are attached at residues asparagine 768, asparagine 796, asparagine 811, asparagine 866, and asparagine 937.

Belongs to the peptidase M28 family. Requires Zn(2+) as cofactor.

It is found in the vacuole membrane. Functionally, may be involved in vacuolar sorting and osmoregulation. This chain is Vacuolar membrane protease, found in Saccharomyces cerevisiae (strain Lalvin EC1118 / Prise de mousse) (Baker's yeast).